The following is a 293-amino-acid chain: Glycerophosphodiester phosphodiesterase (293 aa).

The signal sequence occupies residues 1–26; the sequence is MRKNRILALFVLSLGLLSFMVTPVSA. Positions 38-290 constitute a GP-PDE domain; that stretch reads ILTVAHRGAS…NYPDLFHKVK (253 aa). H43 functions as the Proton acceptor in the catalytic mechanism. The sn-glycerol 3-phosphate site is built by H43, R44, and E70. Ca(2+)-binding residues include E70 and D72. 3 residues coordinate sn-glycerol 3-phosphate: H85, E152, and Q188. The Proton donor role is filled by H85. E152 is a binding site for Ca(2+).

Belongs to the glycerophosphoryl diester phosphodiesterase family. The cofactor is Ca(2+).

It is found in the secreted. The enzyme catalyses a sn-glycero-3-phosphodiester + H2O = an alcohol + sn-glycerol 3-phosphate + H(+). In terms of biological role, glycerophosphodiester phosphodiesterase hydrolyzes glycerophosphodiesters into glycerol-3-phosphate (G3P) and the corresponding alcohol. Involved in wall teichoic acid (WTA) metabolism during phosphate starvation. Catalyzes the degradation of WTA, enabling the utilization of WTA as a phosphate reserve under limiting conditions. Is highly selective for the poly(gylcerol phosphate) WTA backbone and catalyzes exolytic cleavage of individual monomer units. In vitro is active toward the WTA oligomer mimics glycerophosphoglycerol (GPG) and bis-glycerophosphoglycerol (bGPG). The protein is Glycerophosphodiester phosphodiesterase of Bacillus subtilis (strain 168).